The following is a 423-amino-acid chain: Putative serpin-Z12 (423 aa).

The segment at 1-25 (MAALAAGEPFSGRATGGDGGVRSDV) is disordered. Positions 370–394 (GTVAAASTAVVMMQKGSSLPPVDFV) are RCL.

This sequence belongs to the serpin family.

Its function is as follows. Probable serine protease inhibitor. In Oryza sativa subsp. japonica (Rice), this protein is Putative serpin-Z12.